Consider the following 412-residue polypeptide: Thyroxine-binding globulin (412 aa).

The signal sequence occupies residues 1–16; the sequence is MPLFFSLVLLILGLHC. N-linked (GlcNAc...) asparagine glycosylation is found at Asn35, Asn98, Asn164, and Asn252. Residues Asn292 and Lys395 each coordinate thyroxine.

Belongs to the serpin family. Expressed by the liver and secreted in plasma.

It localises to the secreted. Major thyroid hormone transport protein in serum. The sequence is that of Thyroxine-binding globulin (SERPINA7) from Ovis aries (Sheep).